We begin with the raw amino-acid sequence, 171 residues long: T-cell surface glycoprotein CD3 delta chain (171 aa).

The signal sequence occupies residues 1 to 21 (MEHSTFLSGLVLATLLSQVSP). The Extracellular portion of the chain corresponds to 22 to 105 (FKIPVEELED…CVELDPATLA (84 aa)). The cysteines at positions 37 and 73 are disulfide-linked. Residues asparagine 38, asparagine 54, and asparagine 74 are each glycosylated (N-linked (GlcNAc...) asparagine). A helical membrane pass occupies residues 106 to 126 (GIIVTDVIATLLLALGVFCFA). The Cytoplasmic portion of the chain corresponds to 127 to 171 (GHETGRLSGAADTQALLRNDQVYQPLRDRDDAQYSRLGGNWARNK). Positions 138-166 (DTQALLRNDQVYQPLRDRDDAQYSRLGGN) constitute an ITAM domain. Phosphotyrosine is present on residues tyrosine 149 and tyrosine 160.

The TCR-CD3 complex is composed of a CD3D/CD3E and a CD3G/CD3E heterodimers that preferentially associate with TCRalpha and TCRbeta, respectively, to form TCRalpha/CD3E/CD3G and TCRbeta/CD3G/CD3E trimers. In turn, the hexamer interacts with CD3Z homodimer to form the TCR-CD3 complex. Alternatively, TCRalpha and TCRbeta can be replaced by TCRgamma and TCRdelta. Interacts with coreceptors CD4 and CD8. In terms of processing, phosphorylated on Tyr residues after T-cell receptor triggering by LCK in association with CD4/CD8. CD3D is mostly present on T-lymphocytes with its TCR-CD3 partners. Present also in fetal NK-cells.

The protein resides in the cell membrane. Functionally, part of the TCR-CD3 complex present on T-lymphocyte cell surface that plays an essential role in adaptive immune response. When antigen presenting cells (APCs) activate T-cell receptor (TCR), TCR-mediated signals are transmitted across the cell membrane by the CD3 chains CD3D, CD3E, CD3G and CD3Z. All CD3 chains contain immunoreceptor tyrosine-based activation motifs (ITAMs) in their cytoplasmic domain. Upon TCR engagement, these motifs become phosphorylated by Src family protein tyrosine kinases LCK and FYN, resulting in the activation of downstream signaling pathways. In addition of this role of signal transduction in T-cell activation, CD3D plays an essential role in thymocyte differentiation. Indeed, participates in correct intracellular TCR-CD3 complex assembly and surface expression. In absence of a functional TCR-CD3 complex, thymocytes are unable to differentiate properly. Interacts with CD4 and CD8 and thus serves to establish a functional link between the TCR and coreceptors CD4 and CD8, which is needed for activation and positive selection of CD4 or CD8 T-cells. The sequence is that of T-cell surface glycoprotein CD3 delta chain (CD3D) from Macaca fascicularis (Crab-eating macaque).